The following is a 181-amino-acid chain: UPF0302 protein lmo1921 (181 aa).

Belongs to the UPF0302 family.

The sequence is that of UPF0302 protein lmo1921 from Listeria monocytogenes serovar 1/2a (strain ATCC BAA-679 / EGD-e).